A 232-amino-acid polypeptide reads, in one-letter code: Octanoyltransferase (232 aa).

A BPL/LPL catalytic domain is found at glycine 40 to proline 226. Substrate is bound by residues arginine 79 to histidine 86, alanine 157 to glycine 159, and glycine 170 to alanine 172. The active-site Acyl-thioester intermediate is the cysteine 188.

Belongs to the LipB family.

Its subcellular location is the cytoplasm. The catalysed reaction is octanoyl-[ACP] + L-lysyl-[protein] = N(6)-octanoyl-L-lysyl-[protein] + holo-[ACP] + H(+). Its pathway is protein modification; protein lipoylation via endogenous pathway; protein N(6)-(lipoyl)lysine from octanoyl-[acyl-carrier-protein]: step 1/2. Catalyzes the transfer of endogenously produced octanoic acid from octanoyl-acyl-carrier-protein onto the lipoyl domains of lipoate-dependent enzymes. Lipoyl-ACP can also act as a substrate although octanoyl-ACP is likely to be the physiological substrate. This chain is Octanoyltransferase, found in Gluconacetobacter diazotrophicus (strain ATCC 49037 / DSM 5601 / CCUG 37298 / CIP 103539 / LMG 7603 / PAl5).